A 799-amino-acid chain; its full sequence is RasGAP-activating-like protein 1 (799 aa).

C2 domains follow at residues 1 to 105 and 116 to 231; these read MAKS…DSWI and VQGE…NGWF. 10 residues coordinate Ca(2+): aspartate 21, aspartate 27, aspartate 74, aspartate 76, aspartate 82, aspartate 149, aspartate 155, aspartate 202, aspartate 204, and aspartate 210. Residues 316–544 form the Ras-GAP domain; it reads GLAGPFLDYL…SRVRDFLDQL (229 aa). Residue threonine 400 is modified to Phosphothreonine. The PH domain occupies 565-672; that stretch reads TIVREGFLLK…WLSALRKASA (108 aa). A Btk-type zinc finger spans residues 674-710; that stretch reads NPGKLVACHPGAFRSGRWTCCLQAERSAAGCSRTHSA. Zn(2+) is bound by residues histidine 682, cysteine 693, cysteine 694, and cysteine 704.

It depends on Ca(2+) as a cofactor.

Functionally, probable inhibitory regulator of the Ras-cyclic AMP pathway. Plays a role in dendrite formation by melanocytes. In Mus musculus (Mouse), this protein is RasGAP-activating-like protein 1.